Consider the following 277-residue polypeptide: uncharacterized protein (277 aa).

The next 4 membrane-spanning stretches (helical) occupy residues 37 to 59 (YLRY…LYIW), 63 to 82 (LIFG…PKVI), 214 to 236 (MLCG…KTYI), and 246 to 268 (WITS…TYLF).

The protein localises to the cell membrane. This is an uncharacterized protein from Bacillus anthracis.